A 108-amino-acid chain; its full sequence is Phosphocarrier protein HPr (108 aa).

Residues 21–108 (ELQATCIVKN…DAFSSGFGEL (88 aa)) form the HPr domain. His-35 (pros-phosphohistidine intermediate) is an active-site residue.

Belongs to the HPr family.

Its subcellular location is the cytoplasm. Its function is as follows. General (non sugar-specific) component of the phosphoenolpyruvate-dependent sugar phosphotransferase system (sugar PTS). This major carbohydrate active-transport system catalyzes the phosphorylation of incoming sugar substrates concomitantly with their translocation across the cell membrane. The phosphoryl group from phosphoenolpyruvate (PEP) is transferred to the phosphoryl carrier protein HPr by enzyme I. Phospho-HPr then transfers it to the PTS EIIA domain. The sequence is that of Phosphocarrier protein HPr (ptsH) from Chlamydia pneumoniae (Chlamydophila pneumoniae).